The following is a 621-amino-acid chain: tRNA uridine 5-carboxymethylaminomethyl modification enzyme MnmG (621 aa).

G9–G14 lines the FAD pocket. An NAD(+)-binding site is contributed by G268–F282.

It belongs to the MnmG family. As to quaternary structure, homodimer. Heterotetramer of two MnmE and two MnmG subunits. FAD serves as cofactor.

It is found in the cytoplasm. In terms of biological role, NAD-binding protein involved in the addition of a carboxymethylaminomethyl (cmnm) group at the wobble position (U34) of certain tRNAs, forming tRNA-cmnm(5)s(2)U34. This Campylobacter fetus subsp. fetus (strain 82-40) protein is tRNA uridine 5-carboxymethylaminomethyl modification enzyme MnmG.